A 141-amino-acid polypeptide reads, in one-letter code: MAKKITGYIKLQIPAGKANPSPPIGPALGQHGVNIMEFCKAFNAKTQADEGTITPVVITVYADRSFSFITKTPPVPVLIKKTIGIESGSSVPNKNKVGKLTKAQVEEIAKKKMPDLNAASVEAAMRTVEGTARSMGVDIVE.

Belongs to the universal ribosomal protein uL11 family. As to quaternary structure, part of the ribosomal stalk of the 50S ribosomal subunit. Interacts with L10 and the large rRNA to form the base of the stalk. L10 forms an elongated spine to which L12 dimers bind in a sequential fashion forming a multimeric L10(L12)X complex. Post-translationally, one or more lysine residues are methylated.

Its function is as follows. Forms part of the ribosomal stalk which helps the ribosome interact with GTP-bound translation factors. This Trichlorobacter lovleyi (strain ATCC BAA-1151 / DSM 17278 / SZ) (Geobacter lovleyi) protein is Large ribosomal subunit protein uL11.